The chain runs to 225 residues: Ethylene-responsive transcription factor 3 (225 aa).

Over residues 1-12 (MRRGRAAAAPAP) the composition is skewed to low complexity. Disordered stretches follow at residues 1 to 29 (MRRG…IRFR) and 82 to 193 (NFPL…NIAS). A DNA-binding region (AP2/ERF) is located at residues 27 to 84 (RFRGVRKRPWGRFAAEIRDPWKKTRVWLGTFDSAEDAARAYDAAARALRGPKAKTNFP). Positions 118 to 134 (SQRPTSSSMSSTVESFS) are enriched in low complexity. The segment covering 176 to 185 (DHGDCEKEND) has biased composition (basic and acidic residues). The short motif at 202-208 (FDLNLPP) is the EAR-like (transcriptional repression) element.

It belongs to the ethylene-response factor family. Class 2 subfamily.

It is found in the nucleus. Its function is as follows. Transcription factor that binds to the GCC-box pathogenesis-related promoter element. Involved in the regulation of gene expression by stress factors and by components of stress signal transduction pathways. Probably acts as a transcriptional repressor and may regulate other AtERFs. In Nicotiana tabacum (Common tobacco), this protein is Ethylene-responsive transcription factor 3 (ERF3).